A 154-amino-acid chain; its full sequence is ATP synthase subunit b (154 aa).

A helical membrane pass occupies residues 5 to 27; sequence LLGQAIAFTLFVWFCMKYVWPPI.

This sequence belongs to the ATPase B chain family. As to quaternary structure, F-type ATPases have 2 components, F(1) - the catalytic core - and F(0) - the membrane proton channel. F(1) has five subunits: alpha(3), beta(3), gamma(1), delta(1), epsilon(1). F(0) has three main subunits: a(1), b(2) and c(10-14). The alpha and beta chains form an alternating ring which encloses part of the gamma chain. F(1) is attached to F(0) by a central stalk formed by the gamma and epsilon chains, while a peripheral stalk is formed by the delta and b chains.

It is found in the cell inner membrane. F(1)F(0) ATP synthase produces ATP from ADP in the presence of a proton or sodium gradient. F-type ATPases consist of two structural domains, F(1) containing the extramembraneous catalytic core and F(0) containing the membrane proton channel, linked together by a central stalk and a peripheral stalk. During catalysis, ATP synthesis in the catalytic domain of F(1) is coupled via a rotary mechanism of the central stalk subunits to proton translocation. Its function is as follows. Component of the F(0) channel, it forms part of the peripheral stalk, linking F(1) to F(0). The polypeptide is ATP synthase subunit b (Aliivibrio fischeri (strain ATCC 700601 / ES114) (Vibrio fischeri)).